The chain runs to 611 residues: Glutamine--fructose-6-phosphate aminotransferase [isomerizing] (611 aa).

C2 serves as the catalytic Nucleophile; for GATase activity. The 218-residue stretch at 2–219 (CGIVGAIAER…EGDIAEIRRD (218 aa)) folds into the Glutamine amidotransferase type-2 domain. SIS domains lie at 287–427 (AAEL…VQKR) and 460–601 (VSEL…VDQP). The active-site For Fru-6P isomerization activity is the K606.

As to quaternary structure, homodimer.

It localises to the cytoplasm. It catalyses the reaction D-fructose 6-phosphate + L-glutamine = D-glucosamine 6-phosphate + L-glutamate. Its function is as follows. Catalyzes the first step in hexosamine metabolism, converting fructose-6P into glucosamine-6P using glutamine as a nitrogen source. The sequence is that of Glutamine--fructose-6-phosphate aminotransferase [isomerizing] from Pseudomonas aeruginosa (strain ATCC 15692 / DSM 22644 / CIP 104116 / JCM 14847 / LMG 12228 / 1C / PRS 101 / PAO1).